The sequence spans 500 residues: MLKRKKIKPITLGDVTIIDDGKLRKAITAASLGNAMEWFDFGVYGFVAYALGKVFFPGADPSVQMIAALATFSVPFLIRPLGGLFFGMLGDKYGRQKILAITIVIMSISTFCIGLIPSYATIGIWAPILLLLCKMAQGFSVGGEYTGASIFVAEYSPDRKRGFMGSWLDFGSIAGFVLGAGVVVLISTIVGEENFLEWGWRIPFFIALPLGIIGLYLRHALEETPAFQQHVDKLEQGDREGLQDGPKVSFKEIATKHWRSLLSCIGLVIATNVTYYMLLTYMPSYLSHNLHYSEDHGVLIIIAIMIGMLFVQPVMGLLSDRFGRRPFVIMGSIALFALAIPAFILINSNVIGLIFAGLLMLAVILNCFTGVMASTLPAMFPTHIRYSALAAAFNISVLIAGLTPTLAAWLVESSQDLMMPAYYLMVIAVIGLITGISMKETANRPLKGATPAASDIQEAKEILGEHYDNIEQKIDDIDQEIAELQVKRSRLVQQHPRIDE.

The Cytoplasmic portion of the chain corresponds to 1–37; the sequence is MLKRKKIKPITLGDVTIIDDGKLRKAITAASLGNAME. Residues 38 to 58 traverse the membrane as a helical segment; that stretch reads WFDFGVYGFVAYALGKVFFPG. At 59–65 the chain is on the periplasmic side; it reads ADPSVQM. Residues 66–86 traverse the membrane as a helical segment; sequence IAALATFSVPFLIRPLGGLFF. The Cytoplasmic portion of the chain corresponds to 87-97; sequence GMLGDKYGRQK. A helical transmembrane segment spans residues 98–118; that stretch reads ILAITIVIMSISTFCIGLIPS. At 119 to 121 the chain is on the periplasmic side; that stretch reads YAT. A helical membrane pass occupies residues 122 to 142; it reads IGIWAPILLLLCKMAQGFSVG. The Cytoplasmic portion of the chain corresponds to 143 to 169; it reads GEYTGASIFVAEYSPDRKRGFMGSWLD. Residues 170 to 190 traverse the membrane as a helical segment; that stretch reads FGSIAGFVLGAGVVVLISTIV. The Periplasmic segment spans residues 191-194; sequence GEEN. The chain crosses the membrane as a helical span at residues 195 to 215; that stretch reads FLEWGWRIPFFIALPLGIIGL. Residues 216–260 are Cytoplasmic-facing; that stretch reads YLRHALEETPAFQQHVDKLEQGDREGLQDGPKVSFKEIATKHWRS. Residues 261-281 traverse the membrane as a helical segment; sequence LLSCIGLVIATNVTYYMLLTY. The Periplasmic segment spans residues 282–297; it reads MPSYLSHNLHYSEDHG. The helical transmembrane segment at 298-318 threads the bilayer; the sequence is VLIIIAIMIGMLFVQPVMGLL. At 319-325 the chain is on the cytoplasmic side; that stretch reads SDRFGRR. A helical transmembrane segment spans residues 326–346; that stretch reads PFVIMGSIALFALAIPAFILI. The Periplasmic segment spans residues 347-350; it reads NSNV. The chain crosses the membrane as a helical span at residues 351–371; the sequence is IGLIFAGLLMLAVILNCFTGV. The Cytoplasmic segment spans residues 372–390; the sequence is MASTLPAMFPTHIRYSALA. The chain crosses the membrane as a helical span at residues 391–411; it reads AAFNISVLIAGLTPTLAAWLV. The Periplasmic portion of the chain corresponds to 412–416; that stretch reads ESSQD. The chain crosses the membrane as a helical span at residues 417-437; the sequence is LMMPAYYLMVIAVIGLITGIS. At 438–500 the chain is on the cytoplasmic side; that stretch reads MKETANRPLK…LVQQHPRIDE (63 aa). Residues 453–498 adopt a coiled-coil conformation; that stretch reads ASDIQEAKEILGEHYDNIEQKIDDIDQEIAELQVKRSRLVQQHPRI.

Belongs to the major facilitator superfamily. Metabolite:H+ Symporter (MHS) family (TC 2.A.1.6) family.

The protein resides in the cell inner membrane. Functionally, proton symporter that senses osmotic shifts and responds by importing osmolytes such as proline, glycine betaine, stachydrine, pipecolic acid, ectoine and taurine. It is both an osmosensor and an osmoregulator which is available to participate early in the bacterial osmoregulatory response. The protein is Proline/betaine transporter (proP) of Salmonella typhimurium (strain LT2 / SGSC1412 / ATCC 700720).